We begin with the raw amino-acid sequence, 402 residues long: Beta-ketoacyl-[acyl-carrier-protein] synthase III B, chloroplastic (402 aa).

Residues Cys-178, His-328, and Asn-358 contribute to the active site.

Belongs to the thiolase-like superfamily. FabH family.

The protein resides in the plastid. Its subcellular location is the chloroplast. The catalysed reaction is malonyl-[ACP] + acetyl-CoA + H(+) = 3-oxobutanoyl-[ACP] + CO2 + CoA. It participates in lipid metabolism; fatty acid biosynthesis. Functionally, catalyzes the condensation reaction of fatty acid synthesis by the addition to an acyl acceptor of two carbons from malonyl-ACP. KAS III catalyzes the first condensation reaction which initiates fatty acid synthesis and may therefore play a role in governing the total rate of fatty acid production. Possesses both acetoacetyl-ACP synthase and acetyl transacylase activities. The polypeptide is Beta-ketoacyl-[acyl-carrier-protein] synthase III B, chloroplastic (KAS3B) (Cuphea wrightii (Wright's waxweed)).